The following is a 221-amino-acid chain: Germin-like protein 8-2 (221 aa).

The first 24 residues, 1–24, serve as a signal peptide directing secretion; the sequence is MASSSFSFLLVAALLGLASWKAIA. Cys-34 and Cys-49 are disulfide-bonded. Residues Asn-54 and Asn-79 are each glycosylated (N-linked (GlcNAc...) asparagine). The 152-residue stretch at 64–215 folds into the Cupin type-1 domain; sequence AMLDKPRDTN…AFQVDKKIID (152 aa). Residues His-112, His-114, Glu-119, and His-160 each coordinate Mn(2+).

It belongs to the germin family. In terms of assembly, oligomer (believed to be a pentamer but probably hexamer).

The protein resides in the secreted. Its subcellular location is the extracellular space. The protein localises to the apoplast. Functionally, plays a role in broad-spectrum disease resistance. Probably has no oxalate oxidase activity even if the active site is conserved. In Oryza sativa subsp. japonica (Rice), this protein is Germin-like protein 8-2 (GER3).